A 403-amino-acid chain; its full sequence is Acetate kinase (403 aa).

A Mg(2+)-binding site is contributed by N9. K16 contributes to the ATP binding site. Substrate is bound at residue R93. D150 serves as the catalytic Proton donor/acceptor. Residues 210–214 (HLGNG), 284–286 (DFR), and 332–336 (GVGEN) contribute to the ATP site. E388 contributes to the Mg(2+) binding site.

This sequence belongs to the acetokinase family. Homodimer. Mg(2+) is required as a cofactor. Mn(2+) serves as cofactor.

Its subcellular location is the cytoplasm. It carries out the reaction acetate + ATP = acetyl phosphate + ADP. It functions in the pathway metabolic intermediate biosynthesis; acetyl-CoA biosynthesis; acetyl-CoA from acetate: step 1/2. Functionally, catalyzes the formation of acetyl phosphate from acetate and ATP. Can also catalyze the reverse reaction. This Corynebacterium jeikeium (strain K411) protein is Acetate kinase.